Reading from the N-terminus, the 339-residue chain is DNA-directed RNA polymerase subunit alpha (339 aa).

Residues 1–233 (MVREEVAGST…DLFLPFLHAE (233 aa)) are alpha N-terminal domain (alpha-NTD). The alpha C-terminal domain (alpha-CTD) stretch occupies residues 264–339 (KKGIPLNCIF…IDLLKNKLSF (76 aa)).

The protein belongs to the RNA polymerase alpha chain family. In terms of assembly, in plastids the minimal PEP RNA polymerase catalytic core is composed of four subunits: alpha, beta, beta', and beta''. When a (nuclear-encoded) sigma factor is associated with the core the holoenzyme is formed, which can initiate transcription.

The protein localises to the plastid. It localises to the chloroplast. The enzyme catalyses RNA(n) + a ribonucleoside 5'-triphosphate = RNA(n+1) + diphosphate. Functionally, DNA-dependent RNA polymerase catalyzes the transcription of DNA into RNA using the four ribonucleoside triphosphates as substrates. This is DNA-directed RNA polymerase subunit alpha from Elymus hystrix (Eastern bottlebrush grass).